A 236-amino-acid chain; its full sequence is Peptidase E (236 aa).

Residues Ser-122, Asp-137, and His-159 each act as charge relay system in the active site.

The protein belongs to the peptidase S51 family.

The protein localises to the cytoplasm. The catalysed reaction is Dipeptidase E catalyzes the hydrolysis of dipeptides Asp-|-Xaa. It does not act on peptides with N-terminal Glu, Asn or Gln, nor does it cleave isoaspartyl peptides.. In terms of biological role, hydrolyzes dipeptides containing N-terminal aspartate residues. May play a role in allowing the cell to use peptide aspartate to spare carbon otherwise required for the synthesis of the aspartate family of amino acids. The polypeptide is Peptidase E (Shewanella sp. (strain MR-4)).